The chain runs to 131 residues: MAEPDYIEDDNPELIRPQKLINPVKTSRNHQDLHRELLMNQKRGLAPQNKPELQKVMEKRRRDQVIKQKEEEAQKKKSDLEIELLKRQQKLEQLELEKQKLQEEQENAPEFVKVKGNLRRTGQEVAQAQES.

The residue at position 2 (Ala2) is an N-acetylalanine. Disordered regions lie at residues 39-78 and 100-131; these read MNQKRGLAPQNKPELQKVMEKRRRDQVIKQKEEEAQKKKS and KLQEEQENAPEFVKVKGNLRRTGQEVAQAQES. N6-acetyllysine is present on Lys50. Residues 52-78 show a composition bias toward basic and acidic residues; it reads ELQKVMEKRRRDQVIKQKEEEAQKKKS. Residues 61–112 adopt a coiled-coil conformation; sequence RRDQVIKQKEEEAQKKKSDLEIELLKRQQKLEQLELEKQKLQEEQENAPEFV.

This sequence belongs to the FAM107 family.

The sequence is that of Protein FAM107B from Rattus norvegicus (Rat).